A 443-amino-acid polypeptide reads, in one-letter code: MSETMTPSEIVSELDKHIIGQHKAKKAVAVALRNRWRRQQVGDPLRQEITPKNILMIGPTGVGKTEIARRLAKLADAPFIKIEATKFTEVGYVGRDVDTIVRDLAEMAVKQTRESEMKKVRAKAEDAAEDRILDVLIPPPRDIGFAQPEEKDSTARQTFRKKLREGQLDDKEIELEVSAGAPSMDIMGPPGMEDMTEQIRSMFAGLGQGKKNRRKMKVSEAFKLLIDEEAAKLVNEDELKQKAVANVEQNGIVFLDEIDKIASRSEYGGGEVSRQGVQRDLLPLVEGTTVNTKYGMIKTDHILFIASGAFHLSKPSDLIPELQGRFPIRVELDSLSVEDFRAILTQTDASLTKQYQALLKTEGVDLVFAEDGIRRLAEIACSVNEKVENIGARRLYTVMERLLEDLSFHAHKSSGETVTIDAAYVDERLSELSGNEDLSRYVL.

Residues isoleucine 19, glycine 61–glutamate 66, aspartate 256, glutamate 321, and arginine 393 each bind ATP.

It belongs to the ClpX chaperone family. HslU subfamily. A double ring-shaped homohexamer of HslV is capped on each side by a ring-shaped HslU homohexamer. The assembly of the HslU/HslV complex is dependent on binding of ATP.

Its subcellular location is the cytoplasm. Its function is as follows. ATPase subunit of a proteasome-like degradation complex; this subunit has chaperone activity. The binding of ATP and its subsequent hydrolysis by HslU are essential for unfolding of protein substrates subsequently hydrolyzed by HslV. HslU recognizes the N-terminal part of its protein substrates and unfolds these before they are guided to HslV for hydrolysis. This is ATP-dependent protease ATPase subunit HslU from Ralstonia pickettii (strain 12J).